A 242-amino-acid polypeptide reads, in one-letter code: Transcriptional regulatory protein GltR (242 aa).

One can recognise a Response regulatory domain in the interval 7-123 (SILLVDDDQE…ELLARIKALL (117 aa)). Asp56 carries the 4-aspartylphosphate modification. The ompR/PhoB-type DNA-binding region spans 134-234 (GDVLAFEDWR…VRGSGYLLAA (101 aa)).

Post-translationally, phosphorylated by GtrS.

Its subcellular location is the cytoplasm. Phosphorylation of GltR induces its dissociation from DNA leading to transcriptional activation. Its function is as follows. Member of the two-component regulatory system GtrS/GltR involved in the regulation of glucose metabolism and transport, as well as regulation of the exotoxin A gene expression. GltR controls the transcription of genes involved in glucose metabolism (glk and edd/gap-1) and transport (oprB) as well as the expression of toxA that encodes exotoxin A, the primary virulence factor. Acts as a repressor that is released from its target operators upon phosphorylation. Functionally, contributes to modulation of the type III secretion system (T3SS) in response to host cells via the regulation of the OprB transport system. The polypeptide is Transcriptional regulatory protein GltR (Pseudomonas aeruginosa (strain ATCC 15692 / DSM 22644 / CIP 104116 / JCM 14847 / LMG 12228 / 1C / PRS 101 / PAO1)).